Reading from the N-terminus, the 632-residue chain is ATP-dependent DNA helicase RecQ (632 aa).

A Helicase ATP-binding domain is found at 47-215 (IDATLMGKDS…LRHLNLQSPH (169 aa)). Residue 60 to 67 (MATGNGKS) participates in ATP binding. Positions 159–162 (DEAH) match the DEAH box motif. Residues 236–385 (PMEQLCRFVL…IEALKLQAIG (150 aa)) enclose the Helicase C-terminal domain. Positions 393, 410, 413, and 416 each coordinate Zn(2+). The HRDC domain maps to 544 to 624 (AQYDKDLFAR…QQHKKVLTQH (81 aa)).

It belongs to the helicase family. RecQ subfamily. The cofactor is Mg(2+). It depends on Zn(2+) as a cofactor.

It carries out the reaction Couples ATP hydrolysis with the unwinding of duplex DNA by translocating in the 3'-5' direction.. The enzyme catalyses ATP + H2O = ADP + phosphate + H(+). Functionally, an ATP-dependent DNA helicase which unwinds DNA in a 3'-5' direction. Plays a role in recombination. The polypeptide is ATP-dependent DNA helicase RecQ (Pasteurella multocida (strain Pm70)).